The sequence spans 95 residues: Aspartyl/glutamyl-tRNA(Asn/Gln) amidotransferase subunit C (95 aa).

Belongs to the GatC family. Heterotrimer of A, B and C subunits.

The enzyme catalyses L-glutamyl-tRNA(Gln) + L-glutamine + ATP + H2O = L-glutaminyl-tRNA(Gln) + L-glutamate + ADP + phosphate + H(+). It carries out the reaction L-aspartyl-tRNA(Asn) + L-glutamine + ATP + H2O = L-asparaginyl-tRNA(Asn) + L-glutamate + ADP + phosphate + 2 H(+). Allows the formation of correctly charged Asn-tRNA(Asn) or Gln-tRNA(Gln) through the transamidation of misacylated Asp-tRNA(Asn) or Glu-tRNA(Gln) in organisms which lack either or both of asparaginyl-tRNA or glutaminyl-tRNA synthetases. The reaction takes place in the presence of glutamine and ATP through an activated phospho-Asp-tRNA(Asn) or phospho-Glu-tRNA(Gln). The protein is Aspartyl/glutamyl-tRNA(Asn/Gln) amidotransferase subunit C of Acidithiobacillus ferrooxidans (strain ATCC 23270 / DSM 14882 / CIP 104768 / NCIMB 8455) (Ferrobacillus ferrooxidans (strain ATCC 23270)).